A 74-amino-acid chain; its full sequence is uncharacterized protein (74 aa).

The first 19 residues, 1–19 (MIGLIVVPILFAIKGIVVG), serve as a signal peptide directing secretion. Positions 26–74 (KFGKHSNTKDQKEDKDEDKRQSISQRKQHTEWPIEENRIQRRAPNQSAL) are disordered. 2 stretches are compositionally biased toward basic and acidic residues: residues 32–46 (NTKD…DKRQ) and 53–64 (QHTEWPIEENRI).

This is an uncharacterized protein from Saccharomyces cerevisiae (strain ATCC 204508 / S288c) (Baker's yeast).